The chain runs to 468 residues: 6-phospho-beta-galactosidase (468 aa).

Gln-19, His-116, Asn-159, Glu-160, and Asn-297 together coordinate D-galactose 6-phosphate. Glu-160 functions as the Proton donor in the catalytic mechanism. Glu-375 (nucleophile) is an active-site residue. Positions 428, 429, 435, and 437 each coordinate D-galactose 6-phosphate.

Belongs to the glycosyl hydrolase 1 family.

It carries out the reaction a 6-phospho-beta-D-galactoside + H2O = D-galactose 6-phosphate + an alcohol. It functions in the pathway carbohydrate metabolism; lactose degradation; D-galactose 6-phosphate and beta-D-glucose from lactose 6-phosphate: step 1/1. The chain is 6-phospho-beta-galactosidase from Streptococcus uberis (strain ATCC BAA-854 / 0140J).